We begin with the raw amino-acid sequence, 426 residues long: Histidine--tRNA ligase (426 aa).

This sequence belongs to the class-II aminoacyl-tRNA synthetase family. Homodimer.

Its subcellular location is the cytoplasm. It carries out the reaction tRNA(His) + L-histidine + ATP = L-histidyl-tRNA(His) + AMP + diphosphate + H(+). The polypeptide is Histidine--tRNA ligase (Streptococcus pyogenes serotype M28 (strain MGAS6180)).